Reading from the N-terminus, the 365-residue chain is Histidinol-phosphate aminotransferase 2 (365 aa).

Lys-222 bears the N6-(pyridoxal phosphate)lysine mark.

It belongs to the class-II pyridoxal-phosphate-dependent aminotransferase family. Histidinol-phosphate aminotransferase subfamily. Homodimer. It depends on pyridoxal 5'-phosphate as a cofactor.

It carries out the reaction L-histidinol phosphate + 2-oxoglutarate = 3-(imidazol-4-yl)-2-oxopropyl phosphate + L-glutamate. It participates in amino-acid biosynthesis; L-histidine biosynthesis; L-histidine from 5-phospho-alpha-D-ribose 1-diphosphate: step 7/9. The protein is Histidinol-phosphate aminotransferase 2 (hisC2) of Bordetella parapertussis (strain 12822 / ATCC BAA-587 / NCTC 13253).